Here is a 555-residue protein sequence, read N- to C-terminus: Potassium-transporting ATPase potassium-binding subunit (555 aa).

10 helical membrane passes run 2–22 (IWVAVVITMLLFILVAKPTGI), 60–80 (QYALSLVLLNGFMIVVVYFIF), 130–150 (IGITFLMFAAPATTLALVMAF), 173–193 (VFLPIAFVTALVFVALGVPQT), 246–266 (MSNILQMMLMMLLPTALPFTY), 278–298 (ILFVSLFMVFLLGFITITTSE), 374–394 (AGFVNIITYAIIAVFISGLMV), 412–432 (LIAVTILFHPLLILGFSALAL), 483–503 (LVMFLGRYFSLVTMLAVAASL), and 525–545 (GIFIGTIVIVGALTFFPMLVL).

This sequence belongs to the KdpA family. The system is composed of three essential subunits: KdpA, KdpB and KdpC.

It localises to the cell membrane. Its function is as follows. Part of the high-affinity ATP-driven potassium transport (or Kdp) system, which catalyzes the hydrolysis of ATP coupled with the electrogenic transport of potassium into the cytoplasm. This subunit binds the extracellular potassium ions and delivers the ions to the membrane domain of KdpB through an intramembrane tunnel. The chain is Potassium-transporting ATPase potassium-binding subunit from Bacillus thuringiensis subsp. konkukian (strain 97-27).